The sequence spans 346 residues: Holliday junction branch migration complex subunit RuvB (346 aa).

Residues 1 to 16 (MSDADRLITPEKRGED) are compositionally biased toward basic and acidic residues. The interval 1–23 (MSDADRLITPEKRGEDIDTTLRP) is disordered. The segment at 1–182 (MSDADRLITP…FGIPVRLAFY (182 aa)) is large ATPase domain (RuvB-L). ATP is bound by residues Leu21, Arg22, Gly63, Lys66, Thr67, Thr68, 129–131 (EDF), Arg172, Tyr182, and Arg219. Residue Thr67 coordinates Mg(2+). Residues 183-253 (TVDELELIVR…IADEALTRLL (71 aa)) form a small ATPAse domain (RuvB-S) region. The interval 256-346 (NMGLDQLDMR…AQFRLTLEDD (91 aa)) is head domain (RuvB-H). Positions 292, 311, and 316 each coordinate DNA.

This sequence belongs to the RuvB family. In terms of assembly, homohexamer. Forms an RuvA(8)-RuvB(12)-Holliday junction (HJ) complex. HJ DNA is sandwiched between 2 RuvA tetramers; dsDNA enters through RuvA and exits via RuvB. An RuvB hexamer assembles on each DNA strand where it exits the tetramer. Each RuvB hexamer is contacted by two RuvA subunits (via domain III) on 2 adjacent RuvB subunits; this complex drives branch migration. In the full resolvosome a probable DNA-RuvA(4)-RuvB(12)-RuvC(2) complex forms which resolves the HJ.

The protein resides in the cytoplasm. The catalysed reaction is ATP + H2O = ADP + phosphate + H(+). In terms of biological role, the RuvA-RuvB-RuvC complex processes Holliday junction (HJ) DNA during genetic recombination and DNA repair, while the RuvA-RuvB complex plays an important role in the rescue of blocked DNA replication forks via replication fork reversal (RFR). RuvA specifically binds to HJ cruciform DNA, conferring on it an open structure. The RuvB hexamer acts as an ATP-dependent pump, pulling dsDNA into and through the RuvAB complex. RuvB forms 2 homohexamers on either side of HJ DNA bound by 1 or 2 RuvA tetramers; 4 subunits per hexamer contact DNA at a time. Coordinated motions by a converter formed by DNA-disengaged RuvB subunits stimulates ATP hydrolysis and nucleotide exchange. Immobilization of the converter enables RuvB to convert the ATP-contained energy into a lever motion, pulling 2 nucleotides of DNA out of the RuvA tetramer per ATP hydrolyzed, thus driving DNA branch migration. The RuvB motors rotate together with the DNA substrate, which together with the progressing nucleotide cycle form the mechanistic basis for DNA recombination by continuous HJ branch migration. Branch migration allows RuvC to scan DNA until it finds its consensus sequence, where it cleaves and resolves cruciform DNA. The sequence is that of Holliday junction branch migration complex subunit RuvB from Agrobacterium fabrum (strain C58 / ATCC 33970) (Agrobacterium tumefaciens (strain C58)).